Consider the following 148-residue polypeptide: Arginine repressor (148 aa).

Belongs to the ArgR family.

Its subcellular location is the cytoplasm. Its pathway is amino-acid biosynthesis; L-arginine biosynthesis [regulation]. Functionally, regulates arginine biosynthesis genes. In Chlorobium phaeovibrioides (strain DSM 265 / 1930) (Prosthecochloris vibrioformis (strain DSM 265)), this protein is Arginine repressor.